The primary structure comprises 186 residues: Ribosome-recycling factor (186 aa).

The interval 144–163 (EKDGVIGQDESRAQSERVQK) is disordered.

It belongs to the RRF family.

The protein localises to the cytoplasm. Functionally, responsible for the release of ribosomes from messenger RNA at the termination of protein biosynthesis. May increase the efficiency of translation by recycling ribosomes from one round of translation to another. The chain is Ribosome-recycling factor from Rhizobium etli (strain CIAT 652).